The sequence spans 456 residues: Equilibrative nucleoside transporter 1 (456 aa).

The Cytoplasmic portion of the chain corresponds to Thr-2–Lys-12. The chain crosses the membrane as a helical span at residues Ala-13 to Trp-29. The Extracellular portion of the chain corresponds to Asn-30–Asn-82. Asn-48 carries N-linked (GlcNAc...) asparagine glycosylation. Residues Val-83 to Pro-107 traverse the membrane as a helical segment. Residues Gln-108 to Arg-111 are Cytoplasmic-facing. The chain crosses the membrane as a helical span at residues Ile-112–Val-130. Residues Lys-131–Pro-138 lie on the Extracellular side of the membrane. The chain crosses the membrane as a helical span at residues Phe-139–Leu-157. At Gln-158–Ala-174 the chain is on the cytoplasmic side. The chain crosses the membrane as a helical span at residues Pro-175–Ser-199. Residues Glu-200–Phe-206 are Extracellular-facing. A helical membrane pass occupies residues Gly-207–Pro-227. The Cytoplasmic portion of the chain corresponds to Arg-228 to Val-291. Ser-254, Ser-269, and Ser-273 each carry phosphoserine. Residues Ser-254 to Ser-266 are compositionally biased toward basic and acidic residues. Residues Ser-254–Thr-276 are disordered. The helical transmembrane segment at Leu-292–Thr-311 threads the bilayer. Topologically, residues Val-312–Thr-323 are extracellular. The chain crosses the membrane as a helical span at residues Trp-324–Trp-342. Topologically, residues Leu-343–Arg-359 are cytoplasmic. A helical membrane pass occupies residues Trp-360 to Cys-378. The Extracellular segment spans residues Asn-379–Asp-393. Residues Ala-394 to Leu-413 traverse the membrane as a helical segment. Residues Cys-414–Gly-431 lie on the Cytoplasmic side of the membrane. Residues Ala-432–Phe-452 traverse the membrane as a helical segment. The Extracellular segment spans residues Arg-453–Val-456.

Belongs to the SLC29A/ENT transporter (TC 2.A.57) family. Identified in a complex with STOM. Post-translationally, glycosylated. As to expression, expressed in testis at the blood-testis barrier (at protein level). Detected in erythrocytes (at protein level). Expressed at relatively high levels in cerebral cortex, particularly the frontal and parietal lobes, and the thalamus and basal ganglia (at protein level). In the midbrain expressed at moderate levels, whereas in the other areas of the brainstem, namely medulla and pons, cerebellum and the hippocampus expressed at lower amounts when compared to the other brain regions (at protein level). Expressed in Langerhans cells and lymphocytes in the pancreas (at protein level). Expressed in kidney, in polarized renal epithelial cells. Expressed in adipose tissues. Expressed in placenta. Expressed in small intestine.

The protein localises to the basolateral cell membrane. The protein resides in the apical cell membrane. It localises to the cell membrane. The enzyme catalyses adenosine(in) = adenosine(out). The catalysed reaction is guanosine(in) = guanosine(out). It carries out the reaction inosine(in) = inosine(out). It catalyses the reaction uridine(out) = uridine(in). The enzyme catalyses thymidine(in) = thymidine(out). The catalysed reaction is cytidine(in) = cytidine(out). It carries out the reaction adenine(out) = adenine(in). It catalyses the reaction guanine(out) = guanine(in). The enzyme catalyses thymine(out) = thymine(in). The catalysed reaction is uracil(in) = uracil(out). It carries out the reaction hypoxanthine(out) = hypoxanthine(in). Transporter activity is sensitive to low concentrations of the inhibitor nitrobenzylmercaptopurine riboside (NBMPR). Inhibited by dilazep. Inhibited by dipyridamole. Inhibited by hypoxanthine. Inhibited by azidothymidine (AZT). Inhibited by dideoxycytidine (ddC). Inhibited by dideoxyinosine (ddI). Inhibited by draflazine. Inhibited by soluflazine. Inhibited by cladribine. Inhibited by capecitabine. Inhibited by clofarabine. Inhibited by ribavirin. Modestly inhibited by acyclovir. Modestly inhibited by 5-fluorouracil. Functionally, uniporter involved in the facilitative transport of nucleosides and nucleobases, and contributes to maintaining their cellular homeostasis. Functions as a Na(+)-independent transporter. Involved in the transport of nucleosides such as adenosine, guanosine, inosine, uridine, thymidine and cytidine. Also transports purine nucleobases (hypoxanthine, adenine, guanine) and pyrimidine nucleobases (thymine, uracil). Mediates basolateral nucleoside uptake into Sertoli cells, thereby regulating the transport of nucleosides in testis across the blood-testis barrier. Regulates inosine levels in brown adipocytes tissues (BAT) and extracellular inosine levels, which controls BAT-dependent energy expenditure. In Homo sapiens (Human), this protein is Equilibrative nucleoside transporter 1.